The sequence spans 357 residues: MAPTVDIKNLIYPWLIEAEEYSFNDINDGIRLHLNESPFPPPDFIIEEVKKYLHLGNRYQHPSLLERLRELMAEYNRVEPKNIYPTPGGDGALRAVFYNLIQTGDKVVINNPSYSMYKVYASVRGLKLTRVNLIENDNWWKMNFEKFLDEAKNARLVIIDDPNNPTGSPMLKAEEDKVRALAESINGFILIDEAYYEFSGYTVAKLINKYPNLLIVRTLSKAFSLASYRVGYLIGNEEVIKNLMKGATPFDISLPGYIAGITALENPSYVRKIVEEITKNREYLLNGLRKLGLKVYNSLTNFVFVKDERDLLSPLLNKGVAIRKPIIGYYRISVGTKEQVDTLLKYLGEIIENGNSK.

Position 221 is an N6-(pyridoxal phosphate)lysine (Lys-221).

The protein belongs to the class-II pyridoxal-phosphate-dependent aminotransferase family. Histidinol-phosphate aminotransferase subfamily. Pyridoxal 5'-phosphate serves as cofactor.

It carries out the reaction L-histidinol phosphate + 2-oxoglutarate = 3-(imidazol-4-yl)-2-oxopropyl phosphate + L-glutamate. It functions in the pathway amino-acid biosynthesis; L-histidine biosynthesis; L-histidine from 5-phospho-alpha-D-ribose 1-diphosphate: step 7/9. This is Histidinol-phosphate aminotransferase (hisC) from Sulfurisphaera tokodaii (strain DSM 16993 / JCM 10545 / NBRC 100140 / 7) (Sulfolobus tokodaii).